Reading from the N-terminus, the 231-residue chain is Urease subunit gamma/beta (231 aa).

The interval 1-101 (MLLTPTELER…LVTVHQPIRP (101 aa)) is urease gamma. The segment at 102 to 231 (GKLPLAVMPT…RARAQHFKGA (130 aa)) is urease beta.

The protein in the N-terminal section; belongs to the urease gamma subunit family. This sequence in the C-terminal section; belongs to the urease beta subunit family. As to quaternary structure, heterohexamer of 3 UreC (alpha) and 3 UreAB (gamma/beta) subunits.

It localises to the cytoplasm. It catalyses the reaction urea + 2 H2O + H(+) = hydrogencarbonate + 2 NH4(+). Its pathway is nitrogen metabolism; urea degradation; CO(2) and NH(3) from urea (urease route): step 1/1. The sequence is that of Urease subunit gamma/beta from Pseudomonas syringae pv. tomato (strain ATCC BAA-871 / DC3000).